A 296-amino-acid chain; its full sequence is Light-independent protochlorophyllide reductase iron-sulfur ATP-binding protein (296 aa).

Residues Gly39–Thr44 and Lys68 contribute to the ATP site. Ser43 is a Mg(2+) binding site. Residues Cys124 and Cys158 each contribute to the [4Fe-4S] cluster site. Asn209–Arg210 contributes to the ATP binding site.

This sequence belongs to the NifH/BchL/ChlL family. As to quaternary structure, homodimer. Protochlorophyllide reductase is composed of three subunits; ChlL, ChlN and ChlB. Requires [4Fe-4S] cluster as cofactor.

It carries out the reaction chlorophyllide a + oxidized 2[4Fe-4S]-[ferredoxin] + 2 ADP + 2 phosphate = protochlorophyllide a + reduced 2[4Fe-4S]-[ferredoxin] + 2 ATP + 2 H2O. The protein operates within porphyrin-containing compound metabolism; chlorophyll biosynthesis (light-independent). In terms of biological role, component of the dark-operative protochlorophyllide reductase (DPOR) that uses Mg-ATP and reduced ferredoxin to reduce ring D of protochlorophyllide (Pchlide) to form chlorophyllide a (Chlide). This reaction is light-independent. The L component serves as a unique electron donor to the NB-component of the complex, and binds Mg-ATP. The sequence is that of Light-independent protochlorophyllide reductase iron-sulfur ATP-binding protein from Prochlorococcus marinus (strain MIT 9303).